We begin with the raw amino-acid sequence, 491 residues long: UDP-N-acetylmuramate--L-alanine ligase (491 aa).

126-132 contacts ATP; it reads GTHGKTT.

Belongs to the MurCDEF family.

It is found in the cytoplasm. It catalyses the reaction UDP-N-acetyl-alpha-D-muramate + L-alanine + ATP = UDP-N-acetyl-alpha-D-muramoyl-L-alanine + ADP + phosphate + H(+). It participates in cell wall biogenesis; peptidoglycan biosynthesis. In terms of biological role, cell wall formation. The protein is UDP-N-acetylmuramate--L-alanine ligase of Photorhabdus laumondii subsp. laumondii (strain DSM 15139 / CIP 105565 / TT01) (Photorhabdus luminescens subsp. laumondii).